The following is a 419-amino-acid chain: L-rhamnose isomerase (419 aa).

The Mn(2+) site is built by His262, Asp294, and Asp296.

It belongs to the rhamnose isomerase family. In terms of assembly, homotetramer. Mn(2+) serves as cofactor.

The protein resides in the cytoplasm. The enzyme catalyses L-rhamnopyranose = L-rhamnulose. Its pathway is carbohydrate degradation; L-rhamnose degradation; glycerone phosphate from L-rhamnose: step 1/3. Catalyzes the interconversion of L-rhamnose and L-rhamnulose. The sequence is that of L-rhamnose isomerase from Enterobacter sp. (strain 638).